We begin with the raw amino-acid sequence, 115 residues long: Large ribosomal subunit protein bL19 (115 aa).

It belongs to the bacterial ribosomal protein bL19 family.

In terms of biological role, this protein is located at the 30S-50S ribosomal subunit interface and may play a role in the structure and function of the aminoacyl-tRNA binding site. This chain is Large ribosomal subunit protein bL19, found in Pectobacterium atrosepticum (strain SCRI 1043 / ATCC BAA-672) (Erwinia carotovora subsp. atroseptica).